A 137-amino-acid polypeptide reads, in one-letter code: Large-conductance mechanosensitive channel (137 aa).

3 helical membrane-spanning segments follow: residues 15-35, 38-58, and 80-100; these read IDLAIGVIIGGAFGGLVNSIV, ILMPIIGFITGGIDFSNMFIQ, and GNFITLLINFLIIAWVLFLFV.

It belongs to the MscL family. Homopentamer.

It localises to the cell inner membrane. Functionally, channel that opens in response to stretch forces in the membrane lipid bilayer. May participate in the regulation of osmotic pressure changes within the cell. The protein is Large-conductance mechanosensitive channel of Bartonella quintana (strain Toulouse) (Rochalimaea quintana).